We begin with the raw amino-acid sequence, 833 residues long: Leucine--tRNA ligase (833 aa).

Residues P41 to H52 carry the 'HIGH' region motif. The short motif at K610–S614 is the 'KMSKS' region element. K613 is a binding site for ATP.

This sequence belongs to the class-I aminoacyl-tRNA synthetase family.

Its subcellular location is the cytoplasm. The catalysed reaction is tRNA(Leu) + L-leucine + ATP = L-leucyl-tRNA(Leu) + AMP + diphosphate. The chain is Leucine--tRNA ligase from Streptococcus pyogenes serotype M49 (strain NZ131).